The sequence spans 304 residues: uncharacterized protein (304 aa).

Active-site charge relay system residues include T58 and Y121. Y147 functions as the Proton donor in the catalytic mechanism. The active-site Schiff-base intermediate with substrate is the K175.

The protein belongs to the DapA family. As to quaternary structure, homotetramer.

It localises to the cytoplasm. This is an uncharacterized protein from Halobacterium salinarum (strain ATCC 29341 / DSM 671 / R1).